The chain runs to 205 residues: UPF0301 protein Bind_0718 (205 aa).

This sequence belongs to the UPF0301 (AlgH) family.

The sequence is that of UPF0301 protein Bind_0718 from Beijerinckia indica subsp. indica (strain ATCC 9039 / DSM 1715 / NCIMB 8712).